Consider the following 565-residue polypeptide: Urocanate hydratase (565 aa).

NAD(+) contacts are provided by residues G61 to G62, Q139, G185 to G187, E205, R210, N251 to A252, Q272 to H276, Y282 to L283, and Y331. C419 is a catalytic residue. The disordered stretch occupies residues L453–S472. Basic and acidic residues predominate over residues R463–S472. An NAD(+)-binding site is contributed by G501.

This sequence belongs to the urocanase family. It depends on NAD(+) as a cofactor.

It localises to the cytoplasm. It carries out the reaction 4-imidazolone-5-propanoate = trans-urocanate + H2O. It participates in amino-acid degradation; L-histidine degradation into L-glutamate; N-formimidoyl-L-glutamate from L-histidine: step 2/3. In terms of biological role, catalyzes the conversion of urocanate to 4-imidazolone-5-propionate. This is Urocanate hydratase from Pseudomonas savastanoi pv. phaseolicola (strain 1448A / Race 6) (Pseudomonas syringae pv. phaseolicola (strain 1448A / Race 6)).